A 685-amino-acid polypeptide reads, in one-letter code: DNA ligase (685 aa).

NAD(+)-binding positions include 34–38, 83–84, and Glu113; these read DAVFD and SL. The N6-AMP-lysine intermediate role is filled by Lys115. NAD(+) contacts are provided by Arg136, Glu173, Lys297, and Lys321. Residues Cys415, Cys418, Cys433, and Cys438 each coordinate Zn(2+). Residues 607-685 enclose the BRCT domain; it reads QEKLQFSGKT…EQELMTLISN (79 aa).

This sequence belongs to the NAD-dependent DNA ligase family. LigA subfamily. It depends on Mg(2+) as a cofactor. Mn(2+) is required as a cofactor.

It catalyses the reaction NAD(+) + (deoxyribonucleotide)n-3'-hydroxyl + 5'-phospho-(deoxyribonucleotide)m = (deoxyribonucleotide)n+m + AMP + beta-nicotinamide D-nucleotide.. Its function is as follows. DNA ligase that catalyzes the formation of phosphodiester linkages between 5'-phosphoryl and 3'-hydroxyl groups in double-stranded DNA using NAD as a coenzyme and as the energy source for the reaction. It is essential for DNA replication and repair of damaged DNA. This is DNA ligase from Prochlorococcus marinus (strain SARG / CCMP1375 / SS120).